A 122-amino-acid polypeptide reads, in one-letter code: RxLR effector protein Avh52 (122 aa).

A signal peptide spans Met1–Ala21. Residues Arg50–Arg68 carry the RxLR-dEER motif. The TAP1-binding stretch occupies residues Ser69–Val86. Residues Lys87–Lys98 are nuclear localization signal (NLS).

Belongs to the RxLR effector family. In terms of assembly, interacts with host acetyl transferase TAP1.

The protein resides in the secreted. It localises to the host nucleus. Effector that suppresses plant defense responses during the early stages of pathogen infection. Suppresses cell death induced by effectors and PAMPs in plant hosts. Interacts with host acetyltransferase TAP1 and causes TAP1 relocation into the nucleus where it acetylates histones H2A and H3 during early infection, thereby promoting susceptibility of host plant to P.sojae. This Phytophthora sojae (strain P6497) (Soybean stem and root rot agent) protein is RxLR effector protein Avh52.